A 227-amino-acid chain; its full sequence is Protein PhlB (227 aa).

The signal sequence occupies residues methionine 1–glutamine 35. 4 ANK repeats span residues arginine 75 to alanine 104, aspartate 108 to valine 137, threonine 142 to leucine 171, and leucine 175 to arginine 204.

In terms of biological role, cell-protective protein that neutralizes the intracellular lysis capacity of phospholipase A1 through a direct interaction with the enzyme. The protein is Protein PhlB (phlB) of Serratia liquefaciens.